Reading from the N-terminus, the 232-residue chain is Vesicle transport through interaction with t-SNAREs homolog 1B (232 aa).

Position 2 is an N-acetylalanine (A2). Interaction with CLINT1 stretches follow at residues 2–23 and 69–73; these read ATSA…GLHE and APLSF. Residues 2–208 lie on the Cytoplasmic side of the membrane; it reads ATSAASSEHF…SRKVTTNKLL (207 aa). The stretch at 35–98 forms a coiled coil; it reads MAGTEEKKKL…AKLHREVRST (64 aa). T103 is modified (phosphothreonine). R107 is subject to Omega-N-methylarginine. S138 carries the post-translational modification Phosphoserine. The stretch at 161-198 forms a coiled coil; that stretch reads SEIIEELGEQRDQLERTKSRLVNTSENLSKSRKILRSM. The chain crosses the membrane as a helical; Anchor for type IV membrane protein span at residues 209–229; the sequence is LSIVILLELAILGGLVYYKFL. The Vesicular segment spans residues 230–232; the sequence is RRH.

Belongs to the VTI1 family. Forms a SNARE complex with STX7, STX8 and VAMP8 which functions in the homotypic fusion of late endosomes. Component of the SNARE complex composed of STX7, STX8, VAMP7 and VIT1B that is required for heterotypic fusion of late endosomes with lysosomes. May interact with STX17. Interacts with CLINT1.

The protein resides in the early endosome membrane. It localises to the late endosome membrane. The protein localises to the lysosome membrane. Its subcellular location is the cytoplasmic granule. It is found in the recycling endosome membrane. Its function is as follows. V-SNARE that mediates vesicle transport pathways through interactions with t-SNAREs on the target membrane. These interactions are proposed to mediate aspects of the specificity of vesicle trafficking and to promote fusion of the lipid bilayers. May be concerned with increased secretion of cytokines associated with cellular senescence. The chain is Vesicle transport through interaction with t-SNAREs homolog 1B (VTI1B) from Bos taurus (Bovine).